Reading from the N-terminus, the 762-residue chain is 5-methyltetrahydropteroyltriglutamate--homocysteine methyltransferase (762 aa).

Residues 17–20 (REWK) and K111 each bind 5-methyltetrahydropteroyltri-L-glutamate. Residues 435–437 (IGS) and E488 each bind L-homocysteine. L-methionine-binding positions include 435 to 437 (IGS) and E488. 5-methyltetrahydropteroyltri-L-glutamate-binding positions include 519 to 520 (RC) and W565. D603 contacts L-homocysteine. Position 603 (D603) interacts with L-methionine. E609 is a 5-methyltetrahydropteroyltri-L-glutamate binding site. Positions 645, 647, and 669 each coordinate Zn(2+). H698 (proton donor) is an active-site residue. C730 contacts Zn(2+).

The protein belongs to the vitamin-B12 independent methionine synthase family. Zn(2+) serves as cofactor.

It carries out the reaction 5-methyltetrahydropteroyltri-L-glutamate + L-homocysteine = tetrahydropteroyltri-L-glutamate + L-methionine. Its pathway is amino-acid biosynthesis; L-methionine biosynthesis via de novo pathway; L-methionine from L-homocysteine (MetE route): step 1/1. Functionally, catalyzes the transfer of a methyl group from 5-methyltetrahydrofolate to homocysteine resulting in methionine formation. In Bacillus cereus (strain ATCC 10987 / NRS 248), this protein is 5-methyltetrahydropteroyltriglutamate--homocysteine methyltransferase.